A 299-amino-acid polypeptide reads, in one-letter code: uncharacterized protein (299 aa).

It belongs to the glycosyltransferase 2 family.

This is an uncharacterized protein from Mycoplasma pneumoniae (strain ATCC 29342 / M129 / Subtype 1) (Mycoplasmoides pneumoniae).